The following is a 533-amino-acid chain: 2-isopropylmalate synthase (533 aa).

Residues 8-269 (IIIFDTTLRD…YYNPFLGRPA (262 aa)) form the Pyruvate carboxyltransferase domain. The Mn(2+) site is built by Asp-17, His-208, His-210, and Asn-244. Residues 408-533 (RLELVQVSCG…VSANPAKASL (126 aa)) form a regulatory domain region.

Belongs to the alpha-IPM synthase/homocitrate synthase family. LeuA type 1 subfamily. Homodimer. It depends on Mn(2+) as a cofactor.

It localises to the cytoplasm. It catalyses the reaction 3-methyl-2-oxobutanoate + acetyl-CoA + H2O = (2S)-2-isopropylmalate + CoA + H(+). It participates in amino-acid biosynthesis; L-leucine biosynthesis; L-leucine from 3-methyl-2-oxobutanoate: step 1/4. In terms of biological role, catalyzes the condensation of the acetyl group of acetyl-CoA with 3-methyl-2-oxobutanoate (2-ketoisovalerate) to form 3-carboxy-3-hydroxy-4-methylpentanoate (2-isopropylmalate). In Picosynechococcus sp. (strain ATCC 27264 / PCC 7002 / PR-6) (Agmenellum quadruplicatum), this protein is 2-isopropylmalate synthase.